We begin with the raw amino-acid sequence, 326 residues long: Probable GTP 3',8-cyclase (326 aa).

The 230-residue stretch at 6 to 235 (LYGRPVLSLR…NRPRYIIRTQ (230 aa)) folds into the Radical SAM core domain. Residue arginine 15 coordinates GTP. Residues cysteine 22, cysteine 26, and cysteine 29 each contribute to the [4Fe-4S] cluster site. Lysine 62 contacts GTP. Glycine 66 contacts S-adenosyl-L-methionine. Threonine 92 contributes to the GTP binding site. Position 116 (serine 116) interacts with S-adenosyl-L-methionine. Lysine 153 provides a ligand contact to GTP. [4Fe-4S] cluster is bound by residues cysteine 253 and cysteine 256. 258-260 (RLR) serves as a coordination point for GTP. [4Fe-4S] cluster is bound at residue cysteine 270.

Belongs to the radical SAM superfamily. MoaA family. The cofactor is [4Fe-4S] cluster.

It catalyses the reaction GTP + AH2 + S-adenosyl-L-methionine = (8S)-3',8-cyclo-7,8-dihydroguanosine 5'-triphosphate + 5'-deoxyadenosine + L-methionine + A + H(+). The protein operates within cofactor biosynthesis; molybdopterin biosynthesis. Functionally, catalyzes the cyclization of GTP to (8S)-3',8-cyclo-7,8-dihydroguanosine 5'-triphosphate. The chain is Probable GTP 3',8-cyclase from Thermoplasma volcanium (strain ATCC 51530 / DSM 4299 / JCM 9571 / NBRC 15438 / GSS1).